Consider the following 174-residue polypeptide: Crossover junction endodeoxyribonuclease RuvC (174 aa).

Catalysis depends on residues Asp8, Glu67, and Asp139. Mg(2+)-binding residues include Asp8, Glu67, and Asp139.

This sequence belongs to the RuvC family. As to quaternary structure, homodimer which binds Holliday junction (HJ) DNA. The HJ becomes 2-fold symmetrical on binding to RuvC with unstacked arms; it has a different conformation from HJ DNA in complex with RuvA. In the full resolvosome a probable DNA-RuvA(4)-RuvB(12)-RuvC(2) complex forms which resolves the HJ. Mg(2+) serves as cofactor.

The protein localises to the cytoplasm. The enzyme catalyses Endonucleolytic cleavage at a junction such as a reciprocal single-stranded crossover between two homologous DNA duplexes (Holliday junction).. Its function is as follows. The RuvA-RuvB-RuvC complex processes Holliday junction (HJ) DNA during genetic recombination and DNA repair. Endonuclease that resolves HJ intermediates. Cleaves cruciform DNA by making single-stranded nicks across the HJ at symmetrical positions within the homologous arms, yielding a 5'-phosphate and a 3'-hydroxyl group; requires a central core of homology in the junction. The consensus cleavage sequence is 5'-(A/T)TT(C/G)-3'. Cleavage occurs on the 3'-side of the TT dinucleotide at the point of strand exchange. HJ branch migration catalyzed by RuvA-RuvB allows RuvC to scan DNA until it finds its consensus sequence, where it cleaves and resolves the cruciform DNA. This chain is Crossover junction endodeoxyribonuclease RuvC, found in Pseudomonas fluorescens (strain ATCC BAA-477 / NRRL B-23932 / Pf-5).